A 206-amino-acid polypeptide reads, in one-letter code: MSNVRSKICGITRIEDALAAAEAGADAIGFVFYAKSPRAVDVRQARAIIAELPPFVTTVGLFVNASRCELNEILEVVPLDLLQFHGDETPQDCEGYHRPWIKALRVRPGDDLEAACQRYAGARGILLDTYVPGVPGGTGEAFDWSLVPARLGKPIILAGGLSADNVGQAIARVKPYAVDVSGGVEQAKGIKDAAKIEAFMRAVKQA.

Belongs to the TrpF family.

The enzyme catalyses N-(5-phospho-beta-D-ribosyl)anthranilate = 1-(2-carboxyphenylamino)-1-deoxy-D-ribulose 5-phosphate. It participates in amino-acid biosynthesis; L-tryptophan biosynthesis; L-tryptophan from chorismate: step 3/5. This Pseudomonas putida (strain ATCC 700007 / DSM 6899 / JCM 31910 / BCRC 17059 / LMG 24140 / F1) protein is N-(5'-phosphoribosyl)anthranilate isomerase.